The chain runs to 630 residues: tRNA uridine 5-carboxymethylaminomethyl modification enzyme MnmG (630 aa).

13 to 18 (GGGHAG) contacts FAD. 273-287 (GPRYCPSIEDKVNRF) provides a ligand contact to NAD(+).

Belongs to the MnmG family. As to quaternary structure, homodimer. Heterotetramer of two MnmE and two MnmG subunits. FAD is required as a cofactor.

The protein localises to the cytoplasm. Its function is as follows. NAD-binding protein involved in the addition of a carboxymethylaminomethyl (cmnm) group at the wobble position (U34) of certain tRNAs, forming tRNA-cmnm(5)s(2)U34. The chain is tRNA uridine 5-carboxymethylaminomethyl modification enzyme MnmG from Saccharophagus degradans (strain 2-40 / ATCC 43961 / DSM 17024).